Reading from the N-terminus, the 148-residue chain is Ubiquitin conjugating enzyme E2 B (148 aa).

Residues Ala2–Lys148 form the UBC core domain. Cys87 functions as the Glycyl thioester intermediate in the catalytic mechanism.

The protein belongs to the ubiquitin-conjugating enzyme family. In terms of assembly, interacts with mkkA (via F-box/WD40 repeat domains).

The enzyme catalyses S-ubiquitinyl-[E1 ubiquitin-activating enzyme]-L-cysteine + [E2 ubiquitin-conjugating enzyme]-L-cysteine = [E1 ubiquitin-activating enzyme]-L-cysteine + S-ubiquitinyl-[E2 ubiquitin-conjugating enzyme]-L-cysteine.. It functions in the pathway protein modification; protein ubiquitination. Functionally, involved in protein ubiquitination and degradation during development. Mediates protein ubiquitination at the mound and finger stage required for subsequent development and may be an essential component of the developmental transition between the induction of postaggregative gene expression and subsequent cell-type differentiation and morphogenesis. ubcB and ubpB differentially control ubiquitination/deubiquitination and degradation of mkkA protein in a cell-type-specific and temporally regulated manner. This chain is Ubiquitin conjugating enzyme E2 B (ubcB), found in Dictyostelium discoideum (Social amoeba).